The chain runs to 438 residues: MTTSPGVPEPSAQLLRLAAEVRQAAMALGQSDDNQRRKALMAMANALLSSSEQIVRANQLDLEKARTEGLASALMARLRLDESKLNSAIEGLRQLAQLTDPLGLRQLHRELDQDLVLERITVPLGVLGVIFEARPDAVIQITSLAIRSGNGALLKGGSEASHTNQAIIEALKNGLAETEIDPEAIALLKTRQESLALLRLDGLVDLIIPRGSNELVRFIQDNTRIPVLGHADGICHLYLDAAADLKQALQIAIDSKTQYPAACNSIETLLIHQSIAPSFLELAIPAFLQAGVRLLGDSASRALGVEESASEEDWATEYLDLILSVKVVPDLEGALDHIRRYSSRHTEAIVSNDQETAERFLQAVDSAGVFHNCSTRFADGFRYGFGAEVGISTQTLPPRGPVGLEGLVTYRYRLRGQGHIVADYANGECMFTHRDLPL.

Belongs to the gamma-glutamyl phosphate reductase family.

It localises to the cytoplasm. The catalysed reaction is L-glutamate 5-semialdehyde + phosphate + NADP(+) = L-glutamyl 5-phosphate + NADPH + H(+). The protein operates within amino-acid biosynthesis; L-proline biosynthesis; L-glutamate 5-semialdehyde from L-glutamate: step 2/2. Catalyzes the NADPH-dependent reduction of L-glutamate 5-phosphate into L-glutamate 5-semialdehyde and phosphate. The product spontaneously undergoes cyclization to form 1-pyrroline-5-carboxylate. This Prochlorococcus marinus (strain MIT 9313) protein is Gamma-glutamyl phosphate reductase.